A 282-amino-acid chain; its full sequence is 4-diphosphocytidyl-2-C-methyl-D-erythritol kinase (282 aa).

Lys9 is a catalytic residue. 98–108 (PMGGGLGGGSS) is a binding site for ATP. Asp140 is an active-site residue.

This sequence belongs to the GHMP kinase family. IspE subfamily. Homodimer.

The catalysed reaction is 4-CDP-2-C-methyl-D-erythritol + ATP = 4-CDP-2-C-methyl-D-erythritol 2-phosphate + ADP + H(+). Its pathway is isoprenoid biosynthesis; isopentenyl diphosphate biosynthesis via DXP pathway; isopentenyl diphosphate from 1-deoxy-D-xylulose 5-phosphate: step 3/6. Catalyzes the phosphorylation of the position 2 hydroxy group of 4-diphosphocytidyl-2C-methyl-D-erythritol. This chain is 4-diphosphocytidyl-2-C-methyl-D-erythritol kinase, found in Salmonella agona (strain SL483).